A 90-amino-acid polypeptide reads, in one-letter code: Putative ATPase inhibitor, mitochondrial (90 aa).

Residues 42–89 (ESREKAKEDFFVHQHEIEQLRKLKESLKLHREELDELESRVDKKMKSN) are a coiled coil.

It belongs to the ATPase inhibitor family.

It localises to the mitochondrion. Its function is as follows. Forms a one-to-one complex with ATPase to inhibit the enzyme activity completely. This chain is Putative ATPase inhibitor, mitochondrial (inh1), found in Schizosaccharomyces pombe (strain 972 / ATCC 24843) (Fission yeast).